The following is a 298-amino-acid chain: RYEPRARWIEQEGPEYWERETRRAKGNEQSFRVDLRTALRYYNQSAGGSHTLQWMAGCDVESDGRLLRGYWQFAYDGCDYIALNEDLKTWTAADMAAQITRRKWEQAGAAERDRAYLEGECVEWLRRYLKNGNATLLRTDPPKAHVTHHRRPEGDVTLRCWALGFYPADITLTWQLNGEELTQEMELVETRPAGDGTFQKWASVVVPLGKEQKYTCHVEHEGLPEPLTLRWGKEEPPSSTKTNTVIIAVPVVLGAVVILGAVMAFVMKRRRNTGGKGGDYALAPVSQSSDMSLPDCKV.

Over 1–244 (RYEPRARWIE…EPPSSTKTNT (244 aa)) the chain is Extracellular. N43 carries N-linked (GlcNAc...) asparagine glycosylation. C58 and C121 are oxidised to a cystine. An N-linked (GlcNAc...) asparagine glycan is attached at N133. Positions 142–230 (PKAHVTHHRR…EGLPEPLTLR (89 aa)) constitute an Ig-like C1-type domain. C160 and C216 form a disulfide bridge. Residues 245–265 (VIIAVPVVLGAVVILGAVMAF) form a helical membrane-spanning segment. The Cytoplasmic segment spans residues 266 to 298 (VMKRRRNTGGKGGDYALAPVSQSSDMSLPDCKV). The interval 277–298 (GGDYALAPVSQSSDMSLPDCKV) is disordered. Phosphoserine is present on residues S289 and S292.

Belongs to the MHC class I family. Heterodimer of an alpha chain and a beta chain (beta-2-microglobulin).

It localises to the membrane. Involved in the presentation of foreign antigens to the immune system. The protein is H-2 class I histocompatibility antigen, alpha chain (H2-D1) of Mus musculus (Mouse).